Consider the following 150-residue polypeptide: Large ribosomal subunit protein uL11 (150 aa).

The interval 83 to 111 (AAGLKPQGKRNRAKGSEKPGRQTAGTVTA) is disordered.

This sequence belongs to the universal ribosomal protein uL11 family. In terms of assembly, part of the ribosomal stalk of the 50S ribosomal subunit. Interacts with L10 and the large rRNA to form the base of the stalk. L10 forms an elongated spine to which L12 dimers bind in a sequential fashion forming a multimeric L10(L12)X complex. Post-translationally, one or more lysine residues are methylated.

Its function is as follows. Forms part of the ribosomal stalk which helps the ribosome interact with GTP-bound translation factors. This chain is Large ribosomal subunit protein uL11, found in Paracoccus denitrificans (strain Pd 1222).